Here is a 314-residue protein sequence, read N- to C-terminus: Trimethylamine N-oxide-binding protein (314 aa).

The signal sequence occupies residues 1-24; the sequence is MKKIVSLMSALVISVVSFAGISNA. The trimethylamine N-oxide site is built by W38, W85, E114, W164, and W212.

In terms of assembly, the complex is probably composed of two ATP-binding proteins (TmoW), two transmembrane proteins (TmoV) and a solute-binding protein (TmoX).

Its subcellular location is the periplasm. Functionally, part of the ABC transporter complex TmoXWV involved in trimethylamine N-oxide (TMAO) import. Possesses a high binding affinity toward TMAO, but presents little binding affinity toward betaine, carnitine, trimethylamine (TMA) or dimethylamine (DMA). The polypeptide is Trimethylamine N-oxide-binding protein (Pelagibacter ubique (strain HTCC1062)).